Here is a 221-residue protein sequence, read N- to C-terminus: Probable septum site-determining protein MinC (221 aa).

It belongs to the MinC family. As to quaternary structure, interacts with MinD and FtsZ.

Its function is as follows. Cell division inhibitor that blocks the formation of polar Z ring septums. Rapidly oscillates between the poles of the cell to destabilize FtsZ filaments that have formed before they mature into polar Z rings. Prevents FtsZ polymerization. This chain is Probable septum site-determining protein MinC, found in Shewanella denitrificans (strain OS217 / ATCC BAA-1090 / DSM 15013).